Reading from the N-terminus, the 559-residue chain is Formate--tetrahydrofolate ligase (559 aa).

Residue 68–75 participates in ATP binding; sequence TPAGEGKT.

It belongs to the formate--tetrahydrofolate ligase family.

It catalyses the reaction (6S)-5,6,7,8-tetrahydrofolate + formate + ATP = (6R)-10-formyltetrahydrofolate + ADP + phosphate. Its pathway is one-carbon metabolism; tetrahydrofolate interconversion. The chain is Formate--tetrahydrofolate ligase from Rhizobium rhizogenes (strain K84 / ATCC BAA-868) (Agrobacterium radiobacter).